The following is a 790-amino-acid chain: Transient receptor potential cation channel subfamily V member 3 (790 aa).

Over 1–430 the chain is Cytoplasmic; sequence MKAHPKEMVP…TLEPLHTLLH (430 aa). Disordered stretches follow at residues 15–34, 52–71, and 76–112; these read RVAA…PAEI, PNPT…MDSN, and ISGN…KEEQ. Positions 95–105 are enriched in polar residues; the sequence is ETPSNPNSPSA. 7 ANK repeats span residues 117 to 148, 170 to 198, 214 to 243, 261 to 291, 298 to 330, 340 to 362, and 398 to 420; these read RRLK…LCRR, TCLM…EEND, EGQT…DVNA, FGET…DITS, NILH…RSGN, DGLT…YILS, and TTDN…HEML. The helical transmembrane segment at 431 to 460 threads the bilayer; that stretch reads MKWKKFAKHMFFLSFCFYFFYNITLTLVSY. Topologically, residues 461-479 are extracellular; that stretch reads YRPREEEAIPHPLALTHKM. Residues 480–508 form a helical membrane-spanning segment; sequence GWLQLLGRMFVLIWAMCISVKEGIAIFLL. Topologically, residues 509-519 are cytoplasmic; sequence RPSDLQSILSD. The helical transmembrane segment at 520 to 540 threads the bilayer; that stretch reads AWFHFVFFIQAVLVILSVFLY. Residues 541–545 are Extracellular-facing; sequence LFAYK. The helical transmembrane segment at 546–566 threads the bilayer; it reads EYLACLVLAMALGWANMLYYT. The Cytoplasmic segment spans residues 567–569; the sequence is RGF. Residues 570 to 608 form a helical membrane-spanning segment; that stretch reads QSMGMYSVMIQKVILHDVLKFLFVYIVFLLGFGVALASL. Over 609–620 the chain is Extracellular; sequence IEKCPKDNKDCS. Positions 621–646 form an intramembrane region, pore-forming; it reads SYGSFSDAVLELFKLTIGLGDLNIQQ. G638 contributes to the Na(+) binding site. The Extracellular portion of the chain corresponds to 647-649; that stretch reads NSK. Residues 650 to 686 form a helical membrane-spanning segment; it reads YPILFLFLLITYVILTFVLLLNMLIALMGETVENVSK. Residues 687–790 are Cytoplasmic-facing; sequence ESERIWRLQR…EVEEFPETSV (104 aa).

The protein belongs to the transient receptor (TC 1.A.4) family. TrpV subfamily. TRPV3 sub-subfamily. In terms of assembly, homotetramer. May convert from a homotetramer to a homopentamer to allow pore dilation. Interacts with TRPV1; may form a heteromeric channel with TRPV1. Interacts with SNX11; this interaction promotes TRPV3 trafficking from the cell membrane to lysosome for degradation. As to expression, abundantly expressed in CNS. Widely expressed at low levels. Detected in dorsal root ganglion (at protein level). Expressed in the keratinocyte layers of the outer root sheath and, to lesser extent, to the matrix of the hair follicles (at protein level).

The protein localises to the cell membrane. It localises to the cytoplasm. Its subcellular location is the lysosome. The enzyme catalyses Ca(2+)(in) = Ca(2+)(out). It carries out the reaction Mg(2+)(in) = Mg(2+)(out). It catalyses the reaction Na(+)(in) = Na(+)(out). The catalysed reaction is K(+)(in) = K(+)(out). Activated by cannabinoid that binds to the vanilloid binding pocket. Diphenylboronic anhydride induces pore dilation and enhances cation permeability by promoting the conversion to a homopentamer. Non-selective calcium permeant cation channel. It is activated by innocuous (warm) temperatures and shows an increased response at noxious temperatures greater than 39 degrees Celsius. Activation exhibits an outward rectification. The channel pore can dilate to provide permeability to larger cations. May associate with TRPV1 and may modulate its activity. Is a negative regulator of hair growth and cycling: TRPV3-coupled signaling suppresses keratinocyte proliferation in hair follicles and induces apoptosis and premature hair follicle regression (catagen). The chain is Transient receptor potential cation channel subfamily V member 3 (TRPV3) from Homo sapiens (Human).